Reading from the N-terminus, the 1061-residue chain is Ceruloplasmin (1061 aa).

An N-terminal signal peptide occupies residues 1 to 19 (MKFLLLSTFIFLYSSLALA). 6 Plastocyanin-like domains span residues 20-199 (RDKH…LILC), 208-356 (KEKN…VRDC), 369-555 (HVRH…MKIC), 565-713 (RQKD…VNQC), 725-895 (GERT…LIVC), and 903-1057 (FSPK…VEQE). Na(+) is bound by residues tyrosine 55, glycine 64, and tyrosine 67. Cu(2+) contacts are provided by histidine 120 and histidine 122. Histidine 120 contacts O2. Residue lysine 128 participates in Ca(2+) binding. An N-linked (GlcNAc...) asparagine glycan is attached at asparagine 138. The Ca(2+) site is built by glutamine 143, aspartate 146, and aspartate 147. Cysteines 173 and 199 form a disulfide. Cu(2+) is bound by residues histidine 179 and histidine 181. Histidine 179 provides a ligand contact to O2. Asparagine 226 is a glycosylation site (N-linked (GlcNAc...) asparagine). A Na(+)-binding site is contributed by serine 255. A disulfide bridge links cysteine 275 with cysteine 356. 3 residues coordinate Cu(2+): histidine 294, cysteine 337, and histidine 342. N-linked (GlcNAc...) asparagine glycosylation is present at asparagine 396. Phenylalanine 407, glycine 416, and tyrosine 419 together coordinate Na(+). Residues cysteine 529 and cysteine 555 are joined by a disulfide bond. Asparagine 583 carries an N-linked (GlcNAc...) asparagine glycan. A Na(+)-binding site is contributed by serine 612. Residues cysteine 632 and cysteine 713 are joined by a disulfide bond. The Cu(2+) site is built by histidine 651, cysteine 694, histidine 699, and methionine 704. Cysteine 694 acts as the Nucleophile; for glutathione peroxidase activity in catalysis. The N-linked (GlcNAc...) asparagine glycan is linked to asparagine 757. 3 residues coordinate Na(+): phenylalanine 762, glycine 771, and tyrosine 774. An intrachain disulfide couples cysteine 869 to cysteine 895. Asparagine 921 is a glycosylation site (N-linked (GlcNAc...) asparagine). Serine 950 contributes to the Na(+) binding site. Residues histidine 989, histidine 992, histidine 994, histidine 1034, cysteine 1035, histidine 1036, histidine 1040, and methionine 1045 each contribute to the Cu(2+) site. Histidine 992 and histidine 994 together coordinate O2. Histidine 1036 is an O2 binding site.

This sequence belongs to the multicopper oxidase family. As to quaternary structure, found in a complex with MPO and LTF; interacts directly with MPO and LTF, which allows Fe(3+) incorporation into LTF, activation of CP ferroxidase activity and protection of CP antioxidant properties by MPO. Requires Cu(2+) as cofactor. In terms of tissue distribution, expressed in many tissues, including liver, eye and brain.

It localises to the secreted. It catalyses the reaction 4 Fe(2+) + O2 + 4 H(+) = 4 Fe(3+) + 2 H2O. The catalysed reaction is 4 Cu(+) + O2 + 4 H(+) = 4 Cu(2+) + 2 H2O. It carries out the reaction a hydroperoxide + 2 glutathione = an alcohol + glutathione disulfide + H2O. The enzyme catalyses 4 nitric oxide + O2 + 2 H2O = 4 nitrite + 4 H(+). It catalyses the reaction 2 glutathione + H2O2 = glutathione disulfide + 2 H2O. Its function is as follows. Multifunctional blue, copper-binding (6-7 atoms per molecule) glycoprotein. It has ferroxidase activity oxidizing Fe(2+) to Fe(3+) without releasing radical oxygen species. It is involved in iron transport across the cell membrane. Copper ions provide a large number of enzymatic activites. Oxidizes highly toxic ferrous ions to the ferric state for further incorporation onto apo-transferrins, catalyzes Cu(+) oxidation and promotes the oxidation of biogenic amines such as norepinephrin and serotonin. Provides Cu(2+) ions for the ascorbate-mediated deaminase degradation of the heparan sulfate chains of GPC1. Has glutathione peroxidase-like activity, can remove both hydrogen peroxide and lipid hydroperoxide in the presence of thiols. Also shows NO-oxidase and NO2 synthase activities that determine endocrine NO homeostasis. The chain is Ceruloplasmin (Cp) from Mus musculus (Mouse).